Consider the following 212-residue polypeptide: Protein HP-25 homolog 1 (212 aa).

A signal peptide spans 1 to 34; sequence MPGGRRRVGSMNIAGFWILAQFVLLLVANVKSSA. The tract at residues 36-66 is disordered; it reads SELCGPRGARGPPGLSGLPGPPGYTGPIGMP. The segment covering 40 to 53 has biased composition (low complexity); sequence GPRGARGPPGLSGL. The Collagen-like domain occupies 40 to 76; sequence GPRGARGPPGLSGLPGPPGYTGPIGMPGLTGRPGLPG. Positions 82 to 212 constitute a C1q domain; it reads PPLPQSAFSV…VFYGFLLNGN (131 aa). Residue asparagine 125 is glycosylated (N-linked (GlcNAc...) asparagine).

The protein localises to the secreted. This Bos taurus (Bovine) protein is Protein HP-25 homolog 1.